The sequence spans 1142 residues: Coiled-coil domain-containing protein 40 (1142 aa).

Disordered regions lie at residues 1-197 (MAEP…QVLP) and 251-274 (PSTE…AEDE). Composition is skewed to basic and acidic residues over residues 11–27 (SHPE…EGNN) and 35–55 (PEKD…HPEE). Over residues 63-96 (AIEEGEVETEGEAAVEGEEEAVSYGDAESEEEYY) the composition is skewed to acidic residues. Ser-252 is modified (phosphoserine). A compositionally biased stretch (acidic residues) spans 265 to 274 (EGSDEEAEDE). 5 coiled-coil regions span residues 293 to 319 (AALK…ATKQ), 349 to 470 (HDRH…QAED), 526 to 627 (QAKS…LRRK), 684 to 950 (TSSR…LGQL), and 1005 to 1054 (VRKA…LTRL).

This sequence belongs to the CCDC40 family.

It localises to the cytoplasm. The protein resides in the cell projection. Its subcellular location is the cilium. Functionally, required for assembly of dynein regulatory complex (DRC) and inner dynein arm (IDA) complexes, which are responsible for ciliary beat regulation, thereby playing a central role in motility in cilia and flagella. Probably acts together with CCDC39 to form a molecular ruler that determines the 96 nanometer (nm) repeat length and arrangements of components in cilia and flagella. Not required for outer dynein arm complexes assembly. Required for axonemal recruitment of CCDC39. The polypeptide is Coiled-coil domain-containing protein 40 (Homo sapiens (Human)).